Reading from the N-terminus, the 371-residue chain is Glutamate 5-kinase 2 (371 aa).

ATP is bound at residue Lys-13. Substrate-binding residues include Ser-53, Asp-140, and Asn-152. ATP is bound by residues 172–173 (SD) and 214–220 (TGGMRSK). Residues 280–356 (EGEMILSDDC…KELTNRALID (77 aa)) form the PUA domain.

Belongs to the glutamate 5-kinase family.

The protein localises to the cytoplasm. The catalysed reaction is L-glutamate + ATP = L-glutamyl 5-phosphate + ADP. Its pathway is amino-acid biosynthesis; L-proline biosynthesis; L-glutamate 5-semialdehyde from L-glutamate: step 1/2. Catalyzes the transfer of a phosphate group to glutamate to form L-glutamate 5-phosphate. The chain is Glutamate 5-kinase 2 (proJ) from Bacillus subtilis (strain 168).